The sequence spans 482 residues: CBL-interacting serine/threonine-protein kinase 23 (482 aa).

The span at 1–25 (MASRTTPSRSTPSRSTPSGSSSGGR) shows a compositional bias: low complexity. Residues 1–29 (MASRTTPSRSTPSRSTPSGSSSGGRTRVG) are disordered. A Protein kinase domain is found at 31–286 (YELGRTLGEG…FAEVIENEWF (256 aa)). ATP is bound by residues 37–45 (LGEGTFAKV) and Lys-60. Asp-154 functions as the Proton acceptor in the catalytic mechanism. Positions 172-201 (DFGLSALPQQVREDGLLHTTCGTPNYVAPE) are activation loop. Ser-176 bears the Phosphoserine mark. Residue Thr-190 is modified to Phosphothreonine. One can recognise an NAF domain in the interval 328-352 (KTPVTMNAFELISTSQGLNLGSLFE). Residues 359-388 (KRKTRFTSKSSANEIVTKIEAAAAPMGFDV) are PPI. A disordered region spans residues 459–482 (KEEGTDGGGTNGAMANRTIAKQST).

The protein belongs to the protein kinase superfamily. CAMK Ser/Thr protein kinase family. SNF1 subfamily. In terms of assembly, part of a K(+)-channel calcium-sensing kinase/phosphatase complex composed by a calcium sensor CBL (CBL1, CBL2, CBL3 or CBL9), a kinase CIPK (CIPK6, CIPK16 or CIPK23), a phosphatase PP2C (AIP1) and a K(+)-channel (AKT1). Interacts with AKT1, CBL1, CBL2, CBL3, CBL5, CBL8, CBL9 and NRT1.1. Requires Mn(2+) as cofactor. Post-translationally, autophosphorylated. In seedlings, mostly in vascular bundles, and in roots, especially in cortex and endodermis cells. In adult plants, mostly expressed in flowers, and, to a lower extent, in roots, leaves, stems and siliques, particularly in vascular tissues. Also detected in guard cells and root hairs.

It is found in the cell membrane. It carries out the reaction L-seryl-[protein] + ATP = O-phospho-L-seryl-[protein] + ADP + H(+). The enzyme catalyses L-threonyl-[protein] + ATP = O-phospho-L-threonyl-[protein] + ADP + H(+). Functionally, CIPK serine-threonine protein kinases interact with CBL proteins. Binding of a CBL protein to the regulatory NAF domain of CIPK protein leads to activation of the kinase in a calcium-dependent manner. Downstream of CBL1, CBL2, CBL3 and CBL9, regulates by phosphorylation the K(+) conductance and uptake of AKT1 in low K(+) condition, in response to calcium signaling and during the stomatal opening regulation by monitoring the turgor pressure in guard cells. In response to low nitrate concentration, phosphorylates NRT1.1, switching it from a low-affinity nitrate transporter to a high-affinity transporter. Confers tolerance to low potassium conditions. Involved in drought sensitivity and leaf transpiration. The polypeptide is CBL-interacting serine/threonine-protein kinase 23 (CIPK23) (Arabidopsis thaliana (Mouse-ear cress)).